Reading from the N-terminus, the 298-residue chain is ATP synthase gamma chain (298 aa).

It belongs to the ATPase gamma chain family. As to quaternary structure, F-type ATPases have 2 components, CF(1) - the catalytic core - and CF(0) - the membrane proton channel. CF(1) has five subunits: alpha(3), beta(3), gamma(1), delta(1), epsilon(1). CF(0) has three main subunits: a, b and c.

It localises to the cell inner membrane. Produces ATP from ADP in the presence of a proton gradient across the membrane. The gamma chain is believed to be important in regulating ATPase activity and the flow of protons through the CF(0) complex. This Francisella tularensis subsp. tularensis (strain FSC 198) protein is ATP synthase gamma chain.